The following is a 144-amino-acid chain: Large ribosomal subunit protein uL16 (144 aa).

The span at 1–19 (MLLPKRVKYRRQHRPKTTG) shows a compositional bias: basic residues. The disordered stretch occupies residues 1–23 (MLLPKRVKYRRQHRPKTTGRSKG).

It belongs to the universal ribosomal protein uL16 family. Part of the 50S ribosomal subunit.

Binds 23S rRNA and is also seen to make contacts with the A and possibly P site tRNAs. The polypeptide is Large ribosomal subunit protein uL16 (Staphylococcus haemolyticus (strain JCSC1435)).